A 59-amino-acid polypeptide reads, in one-letter code: MGILDKVKNLLSQNADKVETVINKAGEFVDEQTQGNYSDAIHKLHDAASNVVGMSDQQS.

In terms of biological role, antitoxin component of a type II toxin-antitoxin (TA) system. Upon expression in M.smegmatis neutralizes the effect of cognate toxin Rv0910. This Mycobacterium tuberculosis (strain ATCC 25618 / H37Rv) protein is Antitoxin Rv0909.